The sequence spans 586 residues: U-box domain-containing protein 73 (586 aa).

The segment at 21–122 (KADMSGLQRS…AAGADDGPTR (102 aa)) is disordered. Over residues 50-60 (RSAPTSPLRTP) the composition is skewed to low complexity. Positions 182-258 (PIPIAHDGTL…SAWCLDHSDL (77 aa)) constitute a U-box domain.

The catalysed reaction is S-ubiquitinyl-[E2 ubiquitin-conjugating enzyme]-L-cysteine + [acceptor protein]-L-lysine = [E2 ubiquitin-conjugating enzyme]-L-cysteine + N(6)-ubiquitinyl-[acceptor protein]-L-lysine.. The protein operates within protein modification; protein ubiquitination. Functionally, possesses E3 ubiquitin-protein ligase in vitro. This is U-box domain-containing protein 73 (PUB73) from Oryza sativa subsp. japonica (Rice).